The primary structure comprises 451 residues: Alpha-galactosidase (451 aa).

5–71 contacts NAD(+); it reads PKITFIGAGS…ASGRITCHTN (67 aa). Residue N151 participates in substrate binding. C173 contributes to the Mn(2+) binding site. The active-site Proton donor is H174. Position 203 (H203) interacts with Mn(2+). R287 is a substrate binding site.

It belongs to the glycosyl hydrolase 4 family. Homodimer. Mn(2+) serves as cofactor. Requires NAD(+) as cofactor.

The enzyme catalyses Hydrolysis of terminal, non-reducing alpha-D-galactose residues in alpha-D-galactosides, including galactose oligosaccharides, galactomannans and galactolipids.. The protein is Alpha-galactosidase (melA) of Salmonella typhimurium (strain LT2 / SGSC1412 / ATCC 700720).